A 527-amino-acid polypeptide reads, in one-letter code: Baeyer-Villiger monooxygenase (527 aa).

FAD-binding positions include serine 36, glutamate 56, 64–67 (TWRV), aspartate 76, tyrosine 82, and isoleucine 125. Position 74-76 (74-76 (ACD)) interacts with NADP(+). Residues 199-205 (TGASAIQ), 222-223 (RT), and 308-309 (KR) each bind NADP(+). Methionine 415 provides a ligand contact to FAD.

This sequence belongs to the FAD-binding monooxygenase family. Requires FAD as cofactor.

Catalyzes a Baeyer-Villiger oxidation reaction, i.e. the insertion of an oxygen atom into a carbon-carbon bond adjacent to a carbonyl, which converts ketones to esters or lactones using NADPH and/or NADH as an electron donor. Thus, can convert bicyclo[3.2.0]hept-2-en-6-one into the oxidative lactone products 2-oxabicyclo[3.3.0]oct-6-en-3-one and 3-oxabicyclo[3.3.0]oct-6-en-2-one. Is also able to catalyze the sulfoxidation of methyl phenyl sulfide (thioanisole). The sequence is that of Baeyer-Villiger monooxygenase from Pseudomonas aeruginosa (strain ATCC 15692 / DSM 22644 / CIP 104116 / JCM 14847 / LMG 12228 / 1C / PRS 101 / PAO1).